We begin with the raw amino-acid sequence, 354 residues long: 3-dehydroquinate synthase (354 aa).

NAD(+)-binding positions include 66-71 (DGERYK), 100-104 (GVVGD), 124-125 (TT), lysine 137, and lysine 146. The Zn(2+) site is built by glutamate 179, histidine 242, and histidine 259.

Belongs to the sugar phosphate cyclases superfamily. Dehydroquinate synthase family. It depends on Co(2+) as a cofactor. Zn(2+) is required as a cofactor. NAD(+) serves as cofactor.

The protein resides in the cytoplasm. It carries out the reaction 7-phospho-2-dehydro-3-deoxy-D-arabino-heptonate = 3-dehydroquinate + phosphate. The protein operates within metabolic intermediate biosynthesis; chorismate biosynthesis; chorismate from D-erythrose 4-phosphate and phosphoenolpyruvate: step 2/7. In terms of biological role, catalyzes the conversion of 3-deoxy-D-arabino-heptulosonate 7-phosphate (DAHP) to dehydroquinate (DHQ). This is 3-dehydroquinate synthase from Halorhodospira halophila (strain DSM 244 / SL1) (Ectothiorhodospira halophila (strain DSM 244 / SL1)).